A 166-amino-acid polypeptide reads, in one-letter code: Small ribosomal subunit protein uS5 (166 aa).

An S5 DRBM domain is found at 12 to 75 (YIEKLVQVNR…EAARRNMIQV (64 aa)).

The protein belongs to the universal ribosomal protein uS5 family. Part of the 30S ribosomal subunit. Contacts proteins S4 and S8.

Functionally, with S4 and S12 plays an important role in translational accuracy. Its function is as follows. Located at the back of the 30S subunit body where it stabilizes the conformation of the head with respect to the body. This Pseudomonas aeruginosa (strain LESB58) protein is Small ribosomal subunit protein uS5.